A 203-amino-acid chain; its full sequence is dITP/XTP pyrophosphatase (203 aa).

Substrate is bound at residue S9–K14. 2 residues coordinate Mg(2+): E42 and D72. D72 functions as the Proton acceptor in the catalytic mechanism. Substrate is bound by residues S73, F161–D164, K184, and H189–R190.

Belongs to the HAM1 NTPase family. As to quaternary structure, homodimer. Mg(2+) serves as cofactor.

It carries out the reaction XTP + H2O = XMP + diphosphate + H(+). The catalysed reaction is dITP + H2O = dIMP + diphosphate + H(+). It catalyses the reaction ITP + H2O = IMP + diphosphate + H(+). In terms of biological role, pyrophosphatase that catalyzes the hydrolysis of nucleoside triphosphates to their monophosphate derivatives, with a high preference for the non-canonical purine nucleotides XTP (xanthosine triphosphate), dITP (deoxyinosine triphosphate) and ITP. Seems to function as a house-cleaning enzyme that removes non-canonical purine nucleotides from the nucleotide pool, thus preventing their incorporation into DNA/RNA and avoiding chromosomal lesions. In Acidobacterium capsulatum (strain ATCC 51196 / DSM 11244 / BCRC 80197 / JCM 7670 / NBRC 15755 / NCIMB 13165 / 161), this protein is dITP/XTP pyrophosphatase.